Consider the following 340-residue polypeptide: MEYKLNKYIHKINTDPKSIYLNKIAKYYDSSIPIQVGGLRLNDFDSLVKFLKQAYDKAPTETSNKYLVILYGPPASGKSISRYIASYWIQELFKETESIENIYKSFIDTGIDEITYDIETPTGKRIIDLLKENIDNKLGNDKSIENAKKNISLLASSSWDIYRTNRPDYVSELLYYFAIFLNKNIFLETTGSSIPYLERIINLLSFYGYIPIVVYPFINDVSILYNRSIQRGLKEGRFLRCDTSFGLASQMQISLANYPKIKNIVSQYKNYLIYQYNSNFSNEITKNIYSFNFSSLGDYMLEFKCKIETIDDKITQNNIIDITSNNYDKALNLNLNCGEN.

The protein resides in the virion. This is an uncharacterized protein from Acanthamoeba polyphaga (Amoeba).